The chain runs to 218 residues: Cell division protein SepF (218 aa).

The interval 25-115 is disordered; that stretch reads DVAASTDNVI…IANRREQYQQ (91 aa). The segment covering 29–43 has biased composition (polar residues); it reads STDNVIPRSQQSVRA. The segment covering 47 to 63 has biased composition (basic and acidic residues); the sequence is PKQEPRNNHVQQDHQAR.

The protein belongs to the SepF family. In terms of assembly, homodimer. Interacts with FtsZ.

Its subcellular location is the cytoplasm. Functionally, cell division protein that is part of the divisome complex and is recruited early to the Z-ring. Probably stimulates Z-ring formation, perhaps through the cross-linking of FtsZ protofilaments. Its function overlaps with FtsA. The polypeptide is Cell division protein SepF (Streptococcus pyogenes serotype M12 (strain MGAS2096)).